Reading from the N-terminus, the 305-residue chain is Protein FdhE homolog (305 aa).

The protein belongs to the FdhE family.

It localises to the cytoplasm. Necessary for formate dehydrogenase activity. The chain is Protein FdhE homolog from Actinobacillus pleuropneumoniae serotype 7 (strain AP76).